The sequence spans 364 residues: UDP-N-acetylglucosamine--N-acetylmuramyl-(pentapeptide) pyrophosphoryl-undecaprenol N-acetylglucosamine transferase (364 aa).

UDP-N-acetyl-alpha-D-glucosamine contacts are provided by residues Thr19–Gly21, Asn131, Arg167, Ser195, Ile250, and Gln295.

It belongs to the glycosyltransferase 28 family. MurG subfamily.

It localises to the cell inner membrane. The enzyme catalyses di-trans,octa-cis-undecaprenyl diphospho-N-acetyl-alpha-D-muramoyl-L-alanyl-D-glutamyl-meso-2,6-diaminopimeloyl-D-alanyl-D-alanine + UDP-N-acetyl-alpha-D-glucosamine = di-trans,octa-cis-undecaprenyl diphospho-[N-acetyl-alpha-D-glucosaminyl-(1-&gt;4)]-N-acetyl-alpha-D-muramoyl-L-alanyl-D-glutamyl-meso-2,6-diaminopimeloyl-D-alanyl-D-alanine + UDP + H(+). It participates in cell wall biogenesis; peptidoglycan biosynthesis. Its function is as follows. Cell wall formation. Catalyzes the transfer of a GlcNAc subunit on undecaprenyl-pyrophosphoryl-MurNAc-pentapeptide (lipid intermediate I) to form undecaprenyl-pyrophosphoryl-MurNAc-(pentapeptide)GlcNAc (lipid intermediate II). The protein is UDP-N-acetylglucosamine--N-acetylmuramyl-(pentapeptide) pyrophosphoryl-undecaprenol N-acetylglucosamine transferase of Xylella fastidiosa (strain Temecula1 / ATCC 700964).